The primary structure comprises 546 residues: MWRPAAKTTGTNDVPLANKRRFGLPEEGPPSNSPSYAPRPAADIQYFNGRQERERDARDDRERPRDDYDRRRDDYVRDDRDRRYDDYPRDGHSDRRDERSKWDEGDRREAPRGRERSRDRGDSNEDGPRKRRSRWGDASAKVNVPGMPVAVMGNVSQTELDNYAIHVRLEEINRKLRTGDVVPPEGQRSPSPTPQYDAYGRRTNTRELRYRKKLEDERTRLIDRAVKSDPNFRPPVDFQHKRGSRPQDKVYIPVKEFPEINFFGLLVGPRGNSLKKMERESGAKISIRGKGSVKEGKGRAGNFPQDEEDELHCLITADDESKVKTCVALINKVIETAASTPEGENDHKRNQLRELASLNGTLRDDENQLCQNCGEKGHRRWECPQQRVYSANVICRICGGAGHMARDCRGRGDPSLTQNKQTAFDSEYTALMAELGEGGGSTPGSAPAAAIGAPGAIPPQSRVPPWRLPENWQTNSGGFRGPPNFQAQGYQQAAPGAAAYGQQAYPGYAGYQTGAVSGYGSPATGGADAYAAYYASMGQQAPAAAV.

Disordered regions lie at residues 1–141 (MWRP…ASAK) and 178–199 (TGDV…YDAY). Residues 50-128 (RQERERDARD…DRGDSNEDGP (79 aa)) are compositionally biased toward basic and acidic residues. The region spanning 251–330 (YIPVKEFPEI…SKVKTCVALI (80 aa)) is the KH domain. 2 consecutive CCHC-type zinc fingers follow at residues 368-385 (QLCQ…ECPQ) and 393-410 (VICR…DCRG).

It belongs to the BBP/SF1 family.

Its subcellular location is the nucleus. Necessary for the splicing of pre-mRNA. Has a role in the recognition of the branch site (5'-UACUAAC-3'), the pyrimidine tract and the 3'-splice site at the 3'-end of introns. This chain is Branchpoint-bridging protein (BBP), found in Cryptococcus neoformans var. neoformans serotype D (strain B-3501A) (Filobasidiella neoformans).